A 143-amino-acid chain; its full sequence is Large ribosomal subunit protein uL11 (143 aa).

The protein belongs to the universal ribosomal protein uL11 family. As to quaternary structure, part of the ribosomal stalk of the 50S ribosomal subunit. Interacts with L10 and the large rRNA to form the base of the stalk. L10 forms an elongated spine to which L12 dimers bind in a sequential fashion forming a multimeric L10(L12)X complex. One or more lysine residues are methylated.

In terms of biological role, forms part of the ribosomal stalk which helps the ribosome interact with GTP-bound translation factors. This Ralstonia nicotianae (strain ATCC BAA-1114 / GMI1000) (Ralstonia solanacearum) protein is Large ribosomal subunit protein uL11.